Reading from the N-terminus, the 31-residue chain is Photosystem II reaction center protein T (31 aa).

The helical transmembrane segment at 3–23 (ALVYVFLLVGTLMVIFFAIFF) threads the bilayer.

It belongs to the PsbT family. PSII is composed of 1 copy each of membrane proteins PsbA, PsbB, PsbC, PsbD, PsbE, PsbF, PsbH, PsbI, PsbJ, PsbK, PsbL, PsbM, PsbT, PsbX, PsbY, PsbZ, Psb30/Ycf12, at least 3 peripheral proteins of the oxygen-evolving complex and a large number of cofactors. It forms dimeric complexes.

It is found in the plastid. Its subcellular location is the chloroplast thylakoid membrane. Found at the monomer-monomer interface of the photosystem II (PS II) dimer, plays a role in assembly and dimerization of PSII. PSII is a light-driven water plastoquinone oxidoreductase, using light energy to abstract electrons from H(2)O, generating a proton gradient subsequently used for ATP formation. This chain is Photosystem II reaction center protein T, found in Gracilaria tenuistipitata var. liui (Red alga).